Consider the following 233-residue polypeptide: uncharacterized protein (233 aa).

Belongs to the asfivirus H233R family.

This is an uncharacterized protein from African swine fever virus (isolate Tick/Malawi/Lil 20-1/1983) (ASFV).